The following is a 273-amino-acid chain: Putative phosphoenolpyruvate synthase regulatory protein (273 aa).

153 to 160 (GVSRSGKT) lines the ADP pocket.

This sequence belongs to the pyruvate, phosphate/water dikinase regulatory protein family. PSRP subfamily.

The enzyme catalyses [pyruvate, water dikinase] + ADP = [pyruvate, water dikinase]-phosphate + AMP + H(+). It catalyses the reaction [pyruvate, water dikinase]-phosphate + phosphate + H(+) = [pyruvate, water dikinase] + diphosphate. Bifunctional serine/threonine kinase and phosphorylase involved in the regulation of the phosphoenolpyruvate synthase (PEPS) by catalyzing its phosphorylation/dephosphorylation. The polypeptide is Putative phosphoenolpyruvate synthase regulatory protein (Polaromonas naphthalenivorans (strain CJ2)).